We begin with the raw amino-acid sequence, 334 residues long: Biotin synthase (334 aa).

Residues 55–285 (GEGGGVHACS…AHPSKIIKFA (231 aa)) enclose the Radical SAM core domain. Positions 73, 77, and 80 each coordinate [4Fe-4S] cluster. 3 residues coordinate [2Fe-2S] cluster: C152, C213, and K283.

The protein belongs to the radical SAM superfamily. Biotin synthase family. Homodimer. The cofactor is [4Fe-4S] cluster. [2Fe-2S] cluster serves as cofactor.

The enzyme catalyses (4R,5S)-dethiobiotin + (sulfur carrier)-SH + 2 reduced [2Fe-2S]-[ferredoxin] + 2 S-adenosyl-L-methionine = (sulfur carrier)-H + biotin + 2 5'-deoxyadenosine + 2 L-methionine + 2 oxidized [2Fe-2S]-[ferredoxin]. It participates in cofactor biosynthesis; biotin biosynthesis; biotin from 7,8-diaminononanoate: step 2/2. In terms of biological role, catalyzes the conversion of dethiobiotin (DTB) to biotin by the insertion of a sulfur atom into dethiobiotin via a radical-based mechanism. The sequence is that of Biotin synthase from Chlorobaculum parvum (strain DSM 263 / NCIMB 8327) (Chlorobium vibrioforme subsp. thiosulfatophilum).